Reading from the N-terminus, the 103-residue chain is ATP-dependent Clp protease adapter protein ClpS (103 aa).

It belongs to the ClpS family. Binds to the N-terminal domain of the chaperone ClpA.

Functionally, involved in the modulation of the specificity of the ClpAP-mediated ATP-dependent protein degradation. The polypeptide is ATP-dependent Clp protease adapter protein ClpS (Nitrosomonas eutropha (strain DSM 101675 / C91 / Nm57)).